The following is a 395-amino-acid chain: Putative gustatory receptor 93b (395 aa).

Residues 1-18 (MSGLLVMPRILRCLNVSR) lie on the Cytoplasmic side of the membrane. The helical transmembrane segment at 19-39 (ISAILLRSCFLYGTFFGVITF) threads the bilayer. At 40-89 (RIERKDSQLVAINRRGYLWICLVIRLLASCFYGYSYDAWSGQYEDMYLRA) the chain is on the extracellular side. The chain crosses the membrane as a helical span at residues 90-110 (FFGFRLIGCLICSVIILVMQF). Residues 111 to 153 (WFGEELINLVNRFLQLFRRMQSLTNSPKNRFGDRAEFLLMFSK) are Cytoplasmic-facing. A helical transmembrane segment spans residues 154-174 (VFSLLFVFMAFRLMLSPWFLL). Topologically, residues 175–183 (TLVCDLYTS) are extracellular. A helical membrane pass occupies residues 184–204 (VGTGMITHLCFVGYLSIGVLY). At 205–267 (RDLNNYVDCQ…RSFQQLFDLP (63 aa)) the chain is on the cytoplasmic side. A helical membrane pass occupies residues 268–288 (LFLSLAQSLLAMSMVSYHAIL). Residues 289–293 (RRQYS) are Extracellular-facing. The chain crosses the membrane as a helical span at residues 294–314 (FNLWGLVIKLLIDVVLLTMSV). Residues 315-369 (HSAVNGSRLIRRLSFENFYVTDSQSYHQKLELFLGRLQHQELRVFPLGLFEVSNE) lie on the Cytoplasmic side of the membrane. The helical transmembrane segment at 370–390 (LTLFFLSAMVTYLVFLVQYGM) threads the bilayer. At 391–395 (QSQQI) the chain is on the extracellular side.

The protein belongs to the insect chemoreceptor superfamily. Gustatory receptor (GR) family. Gr93a subfamily. As to expression, in larvae, is expressed in neurons of the terminal external chemosensory organ and of the dorsal pharyngeal sense organ.

It localises to the cell membrane. Functionally, probable gustatory receptor which mediates acceptance or avoidance behavior, depending on its substrates. In Drosophila melanogaster (Fruit fly), this protein is Putative gustatory receptor 93b (Gr93b).